The following is a 792-amino-acid chain: MHVIKRDGRQERVMFDKITSRIQKLCYGLNMDFVDPAQITMKVIQGLYSGVTTVELDTLAAETAATLTTKHPDYAILAARIAVSNLHKETKKVFSDVMEDLYNYINPHNGRHSPMVASSTLDIVMANKDRLNSAIIYDRDFSYNYFGFKTLERSYLLKINGKVAERPQHMLMRVSVGIHKEDIDAAIETYNLLSEKWFTHASPTLFNAGTNRPQLSSCFLLSMKDDSIEGIYDTLKQCALISKSAGGIGVAVSCIRATGSYIAGTNGNSNGLVPMLRVYNNTARYVDQGGNKRPGAFAIYLEPWHLDIFEFLDLKKNTGKEEQRARDLFFALWIPDLFMKRVETNQDWSLMCPNECPGLDEVWGEEFEKLYESYEKQGRVRKVVKAQQLWYAIIESQTETGTPYMLYKDSCNRKSNQQNLGTIKCSNLCTEIVEYTSKDEVAVCNLASLALNMYVTPEHTYDFEKLAEVTKVIVRNLNKIIDINYYPIPEAHLSNKRHRPIGIGVQGLADAFILMRYPFESPEAQLLNKQIFETIYYGALEASCELAKEYGPYETYEGSPVSKGILQYDMWNVAPTDLWDWKPLKEKIAKYGIRNSLLIAPMPTASTAQILGNNESIEPYTSNIYTRRVLSGEFQIVNPHLLKDLTERGLWNEEMKNQIIACNGSIQSIPEIPDDLKQLYKTVWEISQKTVLKMAAERGAFIDQSQSLNIHIAEPNYGKLTSMHFYGWKQGLKTGMYYLRTRPAANPIQFTLNKEKLKDKEKALKEEEEKERNTAAMVCSLENREECLMCGS.

The 92-residue stretch at 1–92 (MHVIKRDGRQ…VSNLHKETKK (92 aa)) folds into the ATP-cone domain. ATP is bound by residues 5–6 (KR), 11–17 (ERVMFDK), Thr53, and Asp57. Lys17 bears the N6-acetyllysine mark. Positions 202 and 217 each coordinate GDP. Cys218 and Cys444 are disulfide-bonded. Residues 226–228 (DSI), Lys243, Arg256, and 263–264 (AG) each bind dTTP. Residue Lys376 is modified to N6-acetyllysine. Asn427 is a binding site for GDP. The active-site Proton acceptor is the Asn427. Residue Cys429 is the Cysteine radical intermediate of the active site. GDP is bound by residues Glu431 and 604–607 (TAST). Catalysis depends on Glu431, which acts as the Proton acceptor. Thr751 carries the post-translational modification Phosphothreonine.

Belongs to the ribonucleoside diphosphate reductase large chain family. Heterodimer of a large and a small subunit. Interacts with RRM2B. Interacts with AHCYL1 which inhibits its activity.

It is found in the cytoplasm. The catalysed reaction is a 2'-deoxyribonucleoside 5'-diphosphate + [thioredoxin]-disulfide + H2O = a ribonucleoside 5'-diphosphate + [thioredoxin]-dithiol. Its activity is regulated as follows. Under complex allosteric control mediated by deoxynucleoside triphosphates and ATP binding to separate specificity and activation sites on the M1 subunit. The type of nucleotide bound at the specificity site determines substrate preference. It seems probable that ATP makes the enzyme reduce CDP and UDP, dGTP favors ADP reduction and dTTP favors GDP reduction. Stimulated by ATP and inhibited by dATP binding to the activity site, the dATP inhibition is mediated by AHCYL1 which stabilizes dATP in the site. In terms of biological role, provides the precursors necessary for DNA synthesis. Catalyzes the biosynthesis of deoxyribonucleotides from the corresponding ribonucleotides. The polypeptide is Ribonucleoside-diphosphate reductase large subunit (Rrm1) (Mus musculus (Mouse)).